The chain runs to 191 residues: Phosphopantetheine adenylyltransferase (191 aa).

A substrate-binding site is contributed by serine 8. Residues 8-9 (SF) and histidine 16 each bind ATP. Residues lysine 40, threonine 72, and arginine 86 each contribute to the substrate site. ATP contacts are provided by residues 87–89 (GLR), glutamate 97, and 122–128 (YSFLSSS).

It belongs to the bacterial CoaD family. In terms of assembly, homohexamer. Requires Mg(2+) as cofactor.

The protein resides in the cytoplasm. It carries out the reaction (R)-4'-phosphopantetheine + ATP + H(+) = 3'-dephospho-CoA + diphosphate. It functions in the pathway cofactor biosynthesis; coenzyme A biosynthesis; CoA from (R)-pantothenate: step 4/5. Reversibly transfers an adenylyl group from ATP to 4'-phosphopantetheine, yielding dephospho-CoA (dPCoA) and pyrophosphate. The protein is Phosphopantetheine adenylyltransferase of Nostoc sp. (strain PCC 7120 / SAG 25.82 / UTEX 2576).